Consider the following 353-residue polypeptide: Galectin-9 (353 aa).

In terms of domain architecture, Galectin 1 spans 17-147; it reads FTGPIQGGLQ…CLKLSFITFQ (131 aa). A beta-D-galactoside is bound by residues asparagine 47, histidine 60, arginine 64, asparagine 74, and 81-87; that span reads WGPEERK. A disordered region spans residues 167-186; it reads QFPRTPKGRKQKTQNFRPAH. A Galectin 2 domain is found at 225 to 353; that stretch reads FYTPIPNGLY…GDIQLTHVQT (129 aa). A beta-D-galactoside is bound by residues histidine 265, arginine 269, threonine 279, and 285-291; that span reads WGQEERS.

Homodimer. Accentuated expression in liver and thymus of embryo, detected in embryonic heart, brain, lung, liver, and kidney. Highly expressed in adult thymus, small intestine, and liver, and to a lesser extent in lung, kidney, spleen, cardiac, and skeletal muscle. Barely detectable in brain and reticulocyte. Expressed in placenta, uterus and decidua during pregnancy. Expressed in CD4+ T-cells with higher levels in iTreg cells than other T-cell types and sustained high levels throughout iTreg cell differentiation (at protein level). Expressed in myeloid cells in lung. Constitutively expressed in microglia. Isoform 1 is expressed exclusively in the small intestine. Isoform 2 expression in decidua increases in pathological pregnancy from gestation day 7.5 to 13.5 and it is higher than in normal pregnancy. Isoform 3 expression in decidua is higher in normal pregnancy than in pathological pregnancy.

It localises to the cytoplasm. The protein localises to the nucleus. The protein resides in the secreted. Its function is as follows. Binds galactosides. Has high affinity for the Forssman pentasaccharide. Ligand for HAVCR2/TIM3. Binding to HAVCR2 induces T-helper type 1 lymphocyte (Th1) death. Also stimulates bactericidal activity in infected macrophages by causing macrophage activation and IL1B secretion which restricts intracellular bacterial growth. Ligand for P4HB; the interaction retains P4HB at the cell surface of Th2 T-helper cells, increasing disulfide reductase activity at the plasma membrane, altering the plasma membrane redox state and enhancing cell migration. Ligand for CD44; the interaction enhances binding of SMAD3 to the FOXP3 promoter, leading to up-regulation of FOXP3 expression and increased induced regulatory T (iTreg) cell stability and suppressive function. Promotes ability of mesenchymal stromal cells to suppress T-cell proliferation. Expands regulatory T-cells and induces cytotoxic T-cell apoptosis following virus infection. Activates ERK1/2 phosphorylation inducing cytokine (IL-6, IL-8, IL-12) and chemokine (CCL2) production in mast and dendritic cells. Inhibits degranulation and induces apoptosis of mast cells. Induces maturation and migration of dendritic cells. Inhibits natural killer (NK) cell function. Can transform NK cell phenotype from peripheral to decidual during pregnancy. Astrocyte derived galectin-9 enhances microglial TNF production. May play a role in thymocyte-epithelial interactions relevant to the biology of the thymus. May provide the molecular basis for urate flux across cell membranes, allowing urate that is formed during purine metabolism to efflux from cells and serving as an electrogenic transporter that plays an important role in renal and gastrointestinal urate excretion. Highly selective to the anion urate. Acts as an eosinophil chemoattractant. It also inhibits angiogenesis. Suppresses IFNG production by natural killer cells. This is Galectin-9 (Lgals9) from Mus musculus (Mouse).